The chain runs to 147 residues: Small ribosomal subunit protein eS19 (147 aa).

Belongs to the eukaryotic ribosomal protein eS19 family. As to quaternary structure, component of the small ribosomal subunit.

The protein resides in the cytoplasm. It localises to the nucleus. In terms of biological role, component of the small ribosomal subunit. The ribosome is a large ribonucleoprotein complex responsible for the synthesis of proteins in the cell. Required for pre-rRNA processing and maturation of 40S ribosomal subunits. This chain is Small ribosomal subunit protein eS19 (rps19), found in Ictalurus punctatus (Channel catfish).